The chain runs to 745 residues: Polyribonucleotide nucleotidyltransferase (745 aa).

Mg(2+) contacts are provided by Asp487 and Asp493. The 60-residue stretch at 554–613 (PSTTTIKIDKDKIRDIIGPGGKVIKEICEISGAKIDISDDGTVSIYASDRDKLKVALDKI) folds into the KH domain. The 69-residue stretch at 623–691 (GEIFNGTVMK…NKGKAKLTIK (69 aa)) folds into the S1 motif domain. Positions 691–745 (KNADKDKSSNNTKPKTNAKDNSEPEQRRDSSKKRAWNEDNNAETAEVITERKYFN) are disordered. Residues 707-719 (NAKDNSEPEQRRD) are compositionally biased toward basic and acidic residues.

This sequence belongs to the polyribonucleotide nucleotidyltransferase family. It depends on Mg(2+) as a cofactor.

It localises to the cytoplasm. The enzyme catalyses RNA(n+1) + phosphate = RNA(n) + a ribonucleoside 5'-diphosphate. Involved in mRNA degradation. Catalyzes the phosphorolysis of single-stranded polyribonucleotides processively in the 3'- to 5'-direction. The sequence is that of Polyribonucleotide nucleotidyltransferase from Rickettsia massiliae (strain Mtu5).